The primary structure comprises 202 residues: LexA repressor (202 aa).

A DNA-binding region (H-T-H motif) is located at residues 28 to 48 (RAEIASRLGFRSPNAAEEHLK). Residues serine 119 and lysine 156 each act as for autocatalytic cleavage activity in the active site.

The protein belongs to the peptidase S24 family. Homodimer.

The catalysed reaction is Hydrolysis of Ala-|-Gly bond in repressor LexA.. Functionally, represses a number of genes involved in the response to DNA damage (SOS response), including recA and lexA. Binds to the 16 bp palindromic sequence 5'-CTGTATATATATACAG-3'. In the presence of single-stranded DNA, RecA interacts with LexA causing an autocatalytic cleavage which disrupts the DNA-binding part of LexA, leading to derepression of the SOS regulon and eventually DNA repair. This is LexA repressor from Sodalis glossinidius (strain morsitans).